We begin with the raw amino-acid sequence, 155 residues long: Transcriptional repressor NrdR (155 aa).

Polar residues predominate over residues Met-1–Ser-11. The segment at Met-1–Asn-22 is disordered. Residues Cys-3 to Cys-34 fold into a zinc finger. In terms of domain architecture, ATP-cone spans Leu-49–Ser-139.

This sequence belongs to the NrdR family. Zn(2+) is required as a cofactor.

In terms of biological role, negatively regulates transcription of bacterial ribonucleotide reductase nrd genes and operons by binding to NrdR-boxes. The polypeptide is Transcriptional repressor NrdR (Lactobacillus acidophilus (strain ATCC 700396 / NCK56 / N2 / NCFM)).